The following is a 581-amino-acid chain: Arginine--tRNA ligase (581 aa).

The 'HIGH' region signature appears at 126-136 (PNLAKEMHVGH).

It belongs to the class-I aminoacyl-tRNA synthetase family. In terms of assembly, monomer.

It is found in the cytoplasm. It catalyses the reaction tRNA(Arg) + L-arginine + ATP = L-arginyl-tRNA(Arg) + AMP + diphosphate. This is Arginine--tRNA ligase from Shewanella sp. (strain MR-7).